A 341-amino-acid polypeptide reads, in one-letter code: Probable long-chain-alcohol O-fatty-acyltransferase 1 (341 aa).

8 helical membrane passes run 7-27, 36-56, 58-78, 120-140, 149-169, 233-253, 261-281, and 293-313; these read NLIE…YISS, LLSI…LSCV, FCAI…LLFA, PMPK…LHVY, FVVL…VLVF, MFAG…LLYF, TWEV…EIAV, and AVSG…LFLA.

This sequence belongs to the wax synthase family.

The protein localises to the membrane. It catalyses the reaction a long chain fatty alcohol + a fatty acyl-CoA = a wax ester + CoA. Catalyzes the final step in the synthesis of long-chain linear esters (waxes). This is Probable long-chain-alcohol O-fatty-acyltransferase 1 (AT1) from Arabidopsis thaliana (Mouse-ear cress).